We begin with the raw amino-acid sequence, 149 residues long: D-aminoacyl-tRNA deacylase (149 aa).

The Gly-cisPro motif, important for rejection of L-amino acids signature appears at 137 to 138 (GP).

The protein belongs to the DTD family. As to quaternary structure, homodimer.

Its subcellular location is the cytoplasm. The enzyme catalyses glycyl-tRNA(Ala) + H2O = tRNA(Ala) + glycine + H(+). It carries out the reaction a D-aminoacyl-tRNA + H2O = a tRNA + a D-alpha-amino acid + H(+). Functionally, an aminoacyl-tRNA editing enzyme that deacylates mischarged D-aminoacyl-tRNAs. Also deacylates mischarged glycyl-tRNA(Ala), protecting cells against glycine mischarging by AlaRS. Acts via tRNA-based rather than protein-based catalysis; rejects L-amino acids rather than detecting D-amino acids in the active site. By recycling D-aminoacyl-tRNA to D-amino acids and free tRNA molecules, this enzyme counteracts the toxicity associated with the formation of D-aminoacyl-tRNA entities in vivo and helps enforce protein L-homochirality. This chain is D-aminoacyl-tRNA deacylase, found in Desulforudis audaxviator (strain MP104C).